The primary structure comprises 223 residues: AN1-type zinc finger protein 6 (223 aa).

The A20-type zinc finger occupies 8-42 (SQAPMLCSTGCGFYGNPRTNGMCSVCYKEHLQRQN). Zn(2+) contacts are provided by Cys14, Cys18, Cys30, and Cys33. Positions 41-155 (QNSSNGRISP…PSEEQSKSLE (115 aa)) are disordered. Ser49 carries the post-translational modification Phosphoserine. Polar residues-rich tracts occupy residues 77–110 (ALDS…STSV) and 137–148 (SSVSDTTQQPSE). An AN1-type zinc finger spans residues 158–204 (KQKKNRCFMCRKKVGLTGFECRCGNVYCGVHRYSDVHNCSYNYKADA). Positions 164, 167, 178, 180, 185, 188, 194, and 196 each coordinate Zn(2+). Lys219 carries the N6-acetyllysine modification.

In terms of assembly, interacts with PKN1. Interacts with TRAF2. Interacts with mono- and polyubiquitin. Interacts with PEX6. Interacts with PEX5 (Cys-linked ubiquitinated).

The protein resides in the cytoplasm. Functionally, involved in regulation of TNF-alpha induced NF-kappa-B activation and apoptosis. Involved in modulation of 'Lys-48'-linked polyubiquitination status of TRAF2 and decreases association of TRAF2 with RIPK1. Required for PTS1 target sequence-dependent protein import into peroxisomes and PEX5 stability; may cooperate with PEX6. In vitro involved in PEX5 export from the cytosol to peroxisomes. The polypeptide is AN1-type zinc finger protein 6 (Zfand6) (Mus musculus (Mouse)).